The primary structure comprises 377 residues: NADH dehydrogenase [ubiquinone] 1 alpha subcomplex subunit 9, mitochondrial (377 aa).

The N-terminal 35 residues, 1–35, are a transit peptide targeting the mitochondrion; sequence MAAAAQSRVVRVLSMSRSAITAIATSVCHGPPCRQ. Position 175 is an N6-succinyllysine (Lys175). Residues Lys189 and Lys370 each carry the N6-acetyllysine modification.

Belongs to the complex I NDUFA9 subunit family. Complex I is composed of 45 different subunits. This a component of the hydrophobic protein fraction. Interacts with BLOC1S1. Interacts with SLC2A4. Interacts with CLOCK. Interacts with RAB5IF. Requires FAD as cofactor. Post-translationally, acetylated on lysine residues. BLOC1S1 is required for acetylation.

Its subcellular location is the mitochondrion matrix. Its function is as follows. Accessory subunit of the mitochondrial membrane respiratory chain NADH dehydrogenase (Complex I), that is believed not to be involved in catalysis. Complex I functions in the transfer of electrons from NADH to the respiratory chain. The immediate electron acceptor for the enzyme is believed to be ubiquinone. This Gorilla gorilla gorilla (Western lowland gorilla) protein is NADH dehydrogenase [ubiquinone] 1 alpha subcomplex subunit 9, mitochondrial (NDUFA9).